The chain runs to 129 residues: Small ribosomal subunit protein uS8c (129 aa).

It belongs to the universal ribosomal protein uS8 family. Part of the 30S ribosomal subunit.

The protein resides in the plastid. Its subcellular location is the chloroplast. Functionally, one of the primary rRNA binding proteins, it binds directly to 16S rRNA central domain where it helps coordinate assembly of the platform of the 30S subunit. In Oltmannsiellopsis viridis (Marine flagellate), this protein is Small ribosomal subunit protein uS8c (rps8).